Here is an 842-residue protein sequence, read N- to C-terminus: Leucine--tRNA ligase (842 aa).

The 'HIGH' region motif lies at 44-55 (PYPSANGLHVGH). The 'KMSKS' region motif lies at 619 to 623 (KMSKS). Lys622 serves as a coordination point for ATP.

This sequence belongs to the class-I aminoacyl-tRNA synthetase family.

It is found in the cytoplasm. The catalysed reaction is tRNA(Leu) + L-leucine + ATP = L-leucyl-tRNA(Leu) + AMP + diphosphate. The polypeptide is Leucine--tRNA ligase (Borrelia duttonii (strain Ly)).